The following is a 397-amino-acid chain: Oxysterol-binding protein homolog C354.07c (397 aa).

N-linked (GlcNAc...) asparagine glycosylation is found at asparagine 186 and asparagine 195.

It belongs to the OSBP family.

The protein localises to the endoplasmic reticulum. The protein is Oxysterol-binding protein homolog C354.07c of Schizosaccharomyces pombe (strain 972 / ATCC 24843) (Fission yeast).